The chain runs to 187 residues: Putative type I specificity subunit S.MpnORF289P N-terminus (187 aa).

Belongs to the type-I restriction system S methylase family. As to quaternary structure, the methyltransferase is composed of M and S polypeptides.

Functionally, the N-terminal section of a specificity (S) subunit of a type I methyltransferase (MTase); this subunit dictates DNA sequence specificity. The single R subunit has multiple frameshifts and is probably not expressed. The polypeptide is Putative type I specificity subunit S.MpnORF289P N-terminus (Mycoplasma pneumoniae (strain ATCC 29342 / M129 / Subtype 1) (Mycoplasmoides pneumoniae)).